The following is a 297-amino-acid chain: D-aminoacyl-tRNA deacylase (297 aa).

It belongs to the DtdA deacylase family. As to quaternary structure, monomer. Requires Zn(2+) as cofactor.

The catalysed reaction is a D-aminoacyl-tRNA + H2O = a tRNA + a D-alpha-amino acid + H(+). It carries out the reaction glycyl-tRNA(Ala) + H2O = tRNA(Ala) + glycine + H(+). Its function is as follows. D-aminoacyl-tRNA deacylase with broad substrate specificity. By recycling D-aminoacyl-tRNA to D-amino acids and free tRNA molecules, this enzyme counteracts the toxicity associated with the formation of D-aminoacyl-tRNA entities in vivo. This chain is D-aminoacyl-tRNA deacylase, found in Methanosarcina mazei (strain ATCC BAA-159 / DSM 3647 / Goe1 / Go1 / JCM 11833 / OCM 88) (Methanosarcina frisia).